The sequence spans 442 residues: UPF0489 protein C5orf22 (442 aa).

A disordered region spans residues 175–210 (SSAKKPKLALEDSENTASTNCDSSSEGLEKDTATQR). Residues 189 to 200 (NTASTNCDSSSE) are compositionally biased toward polar residues.

Belongs to the UPF0489 family.

This is UPF0489 protein C5orf22 (C5orf22) from Homo sapiens (Human).